The primary structure comprises 337 residues: Probable allantoicase 1 (337 aa).

This sequence belongs to the allantoicase family.

It catalyses the reaction allantoate + H2O = (S)-ureidoglycolate + urea. It participates in nitrogen metabolism; (S)-allantoin degradation; (S)-ureidoglycolate from allantoate (aminidohydrolase route): step 1/1. The sequence is that of Probable allantoicase 1 from Burkholderia mallei (strain ATCC 23344).